The following is a 342-amino-acid chain: Uroporphyrinogen decarboxylase (342 aa).

Substrate is bound by residues 24–28, Asp74, Tyr149, Ser204, and His319; that span reads RQAGR.

This sequence belongs to the uroporphyrinogen decarboxylase family. Homodimer.

It is found in the cytoplasm. It catalyses the reaction uroporphyrinogen III + 4 H(+) = coproporphyrinogen III + 4 CO2. Its pathway is porphyrin-containing compound metabolism; protoporphyrin-IX biosynthesis; coproporphyrinogen-III from 5-aminolevulinate: step 4/4. In terms of biological role, catalyzes the decarboxylation of four acetate groups of uroporphyrinogen-III to yield coproporphyrinogen-III. In Chelativorans sp. (strain BNC1), this protein is Uroporphyrinogen decarboxylase.